Consider the following 1717-residue polypeptide: PH domain leucine-rich repeat-containing protein phosphatase 1 (1717 aa).

M1 is modified (N-acetylmethionine). Disordered stretches follow at residues 1 to 25 (MEPA…SAPA), 41 to 118 (LAAA…GANS), 136 to 156 (AASS…GAAG), and 252 to 470 (PGAA…PPPT). Residues 98–110 (APQPIAGGAAPVP) are compositionally biased toward low complexity. A compositionally biased stretch (pro residues) spans 262 to 274 (EPPPEAGPRLAPP). 2 stretches are compositionally biased toward low complexity: residues 313–325 (SRRA…DSSP) and 333–345 (PVSS…PVVS). S317 carries the post-translational modification Phosphoserine. Composition is skewed to polar residues over residues 346–358 (DTES…SAES) and 408–417 (QTASSPQPQQ). The residue at position 412 (S412) is a Phosphoserine. Residues 536–636 (RIQLSGMYNV…WLRQVSKVAS (101 aa)) enclose the PH domain. 21 LRR repeats span residues 638–659 (RISS…LFYS), 661–682 (DLTH…PAAR), 692–712 (KLKS…AVCS), 715–736 (TLAE…VGVM), 738–760 (NLQT…ENMK), 761–783 (QLSY…EKLT), 784–804 (AVDK…QALR), 808–831 (HIKH…DFLQ), 832–853 (HVTQ…IFNN), 873–894 (FLKA…PVPN), 895–916 (YLSY…VCES), 918–939 (KLEV…LFCN), 941–962 (SLRK…LERT), 963–984 (SVEV…LLMK), 987–1008 (SLRF…TLSE), 1013–1033 (ILQE…PLLT), 1037–1058 (HLKI…KMAK), 1061–1082 (ELEE…IMNC), 1084–1105 (RMHT…MQLP), 1106–1127 (EIKC…ENLP), and 1129–1150 (KLQE…TLEL). The interaction with NHERF1 stretch occupies residues 1076–1205 (PTTIMNCRRM…NNFCDNREAL (130 aa)). Positions 1175–1422 (SHGYTEASGV…DSISAVVVQL (248 aa)) constitute a PPM-type phosphatase domain. Positions 1210, 1211, 1374, and 1413 each coordinate Mn(2+). 2 disordered regions span residues 1458–1510 (DRPS…SPAY) and 1673–1717 (EVKE…DTPL). Low complexity predominate over residues 1468-1489 (SSSSGMASEISSELSTSEMSSE). The PDZ-binding; required for interaction with NHERF1 motif lies at 1715 to 1717 (TPL).

In terms of assembly, interacts with the nucleotide free form of K-Ras (KRAS) via its LRR repeats. Interacts with AKT2, AKT3, PRKCB isoform beta-II, STK4, RPS6KB1, RAF1. Isoform 1 (predominantly) and isoform 2 interact with BRAP. Interacts with FKBP5; FKBP5 acts as a scaffold for PHLPP1 and Akt. Interacts with SCRIB; SCRIB acts as a scaffold for PHLPP1 and Akt. Interacts with NHERF1; NHERF1 scaffolds a heterotrimeric complex with PTEN at the plasma membrane. Interacts with WDR48 and USP12. It depends on Mn(2+) as a cofactor. In colorectal cancer tissue, expression is highest in the surface epithelium of normal colonic mucosa adjacent to the cancer tissue but is largely excluded from the crypt bases. Expression is lost or significantly decreased in 78% of tested tumors (at protein level). Ubiquitously expressed in non-cancerous tissues.

It is found in the cytoplasm. The protein localises to the membrane. Its subcellular location is the nucleus. It localises to the cell membrane. It catalyses the reaction O-phospho-L-seryl-[protein] + H2O = L-seryl-[protein] + phosphate. It carries out the reaction O-phospho-L-threonyl-[protein] + H2O = L-threonyl-[protein] + phosphate. Its activity is regulated as follows. Insensitive to okadaic acid. Deubiquitination by WDR48-USP12 complex positively regulates PHLPP1 stability. In terms of biological role, protein phosphatase involved in regulation of Akt and PKC signaling. Mediates dephosphorylation in the C-terminal domain hydrophobic motif of members of the AGC Ser/Thr protein kinase family; specifically acts on 'Ser-473' of AKT2 and AKT3, 'Ser-660' of PRKCB and 'Ser-657' of PRKCA. Isoform 2 seems to have a major role in regulating Akt signaling in hippocampal neurons. Akt regulates the balance between cell survival and apoptosis through a cascade that primarily alters the function of transcription factors that regulate pro- and antiapoptotic genes. Dephosphorylation of 'Ser-473' of Akt triggers apoptosis and suppression of tumor growth. Dephosphorylation of PRKCA and PRKCB leads to their destabilization and degradation. Dephosphorylates STK4 on 'Thr-387' leading to STK4 activation and apoptosis. Dephosphorylates RPS6KB1 and is involved in regulation of cap-dependent translation. Inhibits cancer cell proliferation and may act as a tumor suppressor. Dephosphorylates RAF1 inhibiting its kinase activity. May act as a negative regulator of K-Ras signaling in membrane rafts. Involved in the hippocampus-dependent long-term memory formation. Involved in circadian control by regulating the consolidation of circadian periodicity after resetting. Involved in development and function of regulatory T-cells. The chain is PH domain leucine-rich repeat-containing protein phosphatase 1 (PHLPP1) from Homo sapiens (Human).